Here is a 66-residue protein sequence, read N- to C-terminus: Large ribosomal subunit protein bL35 (66 aa).

Belongs to the bacterial ribosomal protein bL35 family.

This chain is Large ribosomal subunit protein bL35, found in Borreliella afzelii (strain PKo) (Borrelia afzelii).